The chain runs to 953 residues: uncharacterized protein (953 aa).

11 consecutive transmembrane segments (helical) span residues 23-43 (VVTS…AFLI), 103-123 (YLFI…PILL), 148-168 (GRYF…LYII), 392-412 (VSAI…VGMI), 435-455 (LLGL…MSFL), 481-501 (AYFA…SAAT), 540-560 (ISSG…LGAF), 575-595 (LSSM…VITF), 599-619 (IISP…YIAY), 642-662 (LFQT…LFAV), and 666-686 (WGPI…HLHL). A disordered region spans residues 910–953 (VPPPYNDVKDEANGEANGEFDTASKENNPFADPKYKEEESRSAV). The segment covering 942-953 (PKYKEEESRSAV) has biased composition (basic and acidic residues). Ser949 carries the post-translational modification Phosphoserine.

It belongs to the CSC1 (TC 1.A.17) family.

It localises to the membrane. Acts as an osmosensitive calcium-permeable cation channel. This is an uncharacterized protein from Saccharomyces cerevisiae (strain ATCC 204508 / S288c) (Baker's yeast).